A 999-amino-acid chain; its full sequence is uncharacterized protein (999 aa).

Residues 45–128 (NSNNIGNGNG…TPTITPSSPS (84 aa)) show a composition bias toward low complexity. The disordered stretch occupies residues 45–129 (NSNNIGNGNG…PTITPSSPSV (85 aa)). Positions 723 to 767 (YQQSQQQQSQQQQQQQQQQQQQQQQQQQQQQQQQQQQQQQQQQQQ) form a coiled coil. Residues 873–887 (NDINNANNSNNNNNN) show a composition bias toward low complexity. Residues 873–904 (NDINNANNSNNNNNNQSQVLLSPNRNKDGTLN) form a disordered region. A helical transmembrane segment spans residues 976-996 (LFSLVLILAFIWFFFEIYFFF).

Its subcellular location is the membrane. This is an uncharacterized protein from Dictyostelium discoideum (Social amoeba).